A 601-amino-acid polypeptide reads, in one-letter code: Probable translation initiation factor IF-2 (601 aa).

The 216-residue stretch at 14-229 (LRTPIVAVLG…VMMGLSQRYM (216 aa)) folds into the tr-type G domain. Residues 23–30 (GHVDHGKT) form a G1 region. 23–30 (GHVDHGKT) contributes to the GTP binding site. Positions 48-52 (AITQH) are G2. A G3 region spans residues 85–88 (DTPG). Residues 85–89 (DTPGH) and 139–142 (NKID) contribute to the GTP site. Positions 139–142 (NKID) are G4. The tract at residues 207-209 (SAE) is G5.

The protein belongs to the TRAFAC class translation factor GTPase superfamily. Classic translation factor GTPase family. IF-2 subfamily.

In terms of biological role, function in general translation initiation by promoting the binding of the formylmethionine-tRNA to ribosomes. Seems to function along with eIF-2. The chain is Probable translation initiation factor IF-2 from Haloarcula marismortui (strain ATCC 43049 / DSM 3752 / JCM 8966 / VKM B-1809) (Halobacterium marismortui).